The primary structure comprises 146 residues: 3-hydroxyacyl-[acyl-carrier-protein] dehydratase FabZ (146 aa).

His46 is a catalytic residue.

The protein belongs to the thioester dehydratase family. FabZ subfamily.

It is found in the cytoplasm. It catalyses the reaction a (3R)-hydroxyacyl-[ACP] = a (2E)-enoyl-[ACP] + H2O. Involved in unsaturated fatty acids biosynthesis. Catalyzes the dehydration of short chain beta-hydroxyacyl-ACPs and long chain saturated and unsaturated beta-hydroxyacyl-ACPs. This is 3-hydroxyacyl-[acyl-carrier-protein] dehydratase FabZ from Acinetobacter baumannii (strain ATCC 17978 / DSM 105126 / CIP 53.77 / LMG 1025 / NCDC KC755 / 5377).